The sequence spans 428 residues: Adenylosuccinate synthetase (428 aa).

GTP-binding positions include G12 to K18 and G40 to T42. D13 (proton acceptor) is an active-site residue. Residues D13 and G40 each coordinate Mg(2+). Residues D13–K16, N38–H41, T133, R147, N224, T239, and R303 each bind IMP. Residue H41 is the Proton donor of the active site. Residue T299–R305 coordinates substrate. Residues R305, K331–D333, and G413–G415 each bind GTP.

This sequence belongs to the adenylosuccinate synthetase family. In terms of assembly, homodimer. The cofactor is Mg(2+).

It localises to the cytoplasm. The catalysed reaction is IMP + L-aspartate + GTP = N(6)-(1,2-dicarboxyethyl)-AMP + GDP + phosphate + 2 H(+). The protein operates within purine metabolism; AMP biosynthesis via de novo pathway; AMP from IMP: step 1/2. Functionally, plays an important role in the de novo pathway and in the salvage pathway of purine nucleotide biosynthesis. Catalyzes the first committed step in the biosynthesis of AMP from IMP. The protein is Adenylosuccinate synthetase of Coprinopsis cinerea (strain Okayama-7 / 130 / ATCC MYA-4618 / FGSC 9003) (Inky cap fungus).